Here is a 364-residue protein sequence, read N- to C-terminus: Guanine nucleotide-binding protein alpha-8 subunit (364 aa).

The N-myristoyl glycine moiety is linked to residue Gly-2. Cys-5 carries the S-palmitoyl cysteine lipid modification. Residues 38 to 364 enclose the G-alpha domain; the sequence is KILKLLILGP…QHTMQKVGIQ (327 aa). The G1 motif stretch occupies residues 41–54; the sequence is KLLILGPGESGKST. GTP-binding positions include 46 to 53, 186 to 192, 211 to 215, 280 to 283, and Ala-336; these read GPGESGKS, LKSRVPT, DVGGQ, and NKID. Residues Ser-53 and Thr-192 each contribute to the Mg(2+) site. The G2 motif stretch occupies residues 184–192; sequence DILKSRVPT. The segment at 207 to 216 is G3 motif; sequence FKIFDVGGQR. The interval 276-283 is G4 motif; the sequence is ILFLNKID. The segment at 334 to 339 is G5 motif; it reads TCATDT.

It belongs to the G-alpha family. As to quaternary structure, g proteins are composed of 3 units; alpha, beta and gamma. The alpha chain contains the guanine nucleotide binding site.

Functionally, guanine nucleotide-binding proteins (G proteins) are involved as modulators or transducers in various transmembrane signaling systems. The chain is Guanine nucleotide-binding protein alpha-8 subunit (gpa-8) from Caenorhabditis briggsae.